Reading from the N-terminus, the 251-residue chain is 1-(5-phosphoribosyl)-5-[(5-phosphoribosylamino)methylideneamino] imidazole-4-carboxamide isomerase (251 aa).

The active-site Proton acceptor is D8. D131 (proton donor) is an active-site residue.

It belongs to the HisA/HisF family.

Its subcellular location is the cytoplasm. It carries out the reaction 1-(5-phospho-beta-D-ribosyl)-5-[(5-phospho-beta-D-ribosylamino)methylideneamino]imidazole-4-carboxamide = 5-[(5-phospho-1-deoxy-D-ribulos-1-ylimino)methylamino]-1-(5-phospho-beta-D-ribosyl)imidazole-4-carboxamide. It participates in amino-acid biosynthesis; L-histidine biosynthesis; L-histidine from 5-phospho-alpha-D-ribose 1-diphosphate: step 4/9. The protein is 1-(5-phosphoribosyl)-5-[(5-phosphoribosylamino)methylideneamino] imidazole-4-carboxamide isomerase of Burkholderia ambifaria (strain MC40-6).